The chain runs to 818 residues: Glycerol-3-phosphate acyltransferase (818 aa).

The HXXXXD motif signature appears at 308–313 (CHRSHM).

This sequence belongs to the GPAT/DAPAT family.

It localises to the cell inner membrane. It catalyses the reaction sn-glycerol 3-phosphate + an acyl-CoA = a 1-acyl-sn-glycero-3-phosphate + CoA. Its pathway is phospholipid metabolism; CDP-diacylglycerol biosynthesis; CDP-diacylglycerol from sn-glycerol 3-phosphate: step 1/3. The protein is Glycerol-3-phosphate acyltransferase of Alteromonas mediterranea (strain DSM 17117 / CIP 110805 / LMG 28347 / Deep ecotype).